The sequence spans 138 residues: Basic leucine zipper 8 (138 aa).

Residues 30–67 (NLPATSDDSSRTAEDNERKRRRKVSNRESARRSRMRKQ) form a disordered region. Positions 37 to 47 (DSSRTAEDNER) are enriched in basic and acidic residues. The bZIP domain maps to 45–108 (NERKRRRKVS…EKVIEENMKL (64 aa)). The basic motif stretch occupies residues 47–68 (RKRRRKVSNRESARRSRMRKQR). The Nuclear localization signal motif lies at 48 to 55 (KRRRKVSN). The interval 73–87 (LWSMLVQLINKNKSL) is leucine-zipper.

The protein belongs to the bZIP family. Homodimer.

It localises to the nucleus. The polypeptide is Basic leucine zipper 8 (Arabidopsis thaliana (Mouse-ear cress)).